We begin with the raw amino-acid sequence, 307 residues long: Aspartate carbamoyltransferase catalytic subunit (307 aa).

The carbamoyl phosphate site is built by Arg-59 and Thr-60. Lys-87 serves as a coordination point for L-aspartate. Carbamoyl phosphate contacts are provided by Arg-109, His-137, and Gln-140. L-aspartate is bound by residues Arg-173 and Arg-223. 2 residues coordinate carbamoyl phosphate: Gly-266 and Pro-267.

The protein belongs to the aspartate/ornithine carbamoyltransferase superfamily. ATCase family. Heterododecamer (2C3:3R2) of six catalytic PyrB chains organized as two trimers (C3), and six regulatory PyrI chains organized as three dimers (R2).

The catalysed reaction is carbamoyl phosphate + L-aspartate = N-carbamoyl-L-aspartate + phosphate + H(+). It functions in the pathway pyrimidine metabolism; UMP biosynthesis via de novo pathway; (S)-dihydroorotate from bicarbonate: step 2/3. Functionally, catalyzes the condensation of carbamoyl phosphate and aspartate to form carbamoyl aspartate and inorganic phosphate, the committed step in the de novo pyrimidine nucleotide biosynthesis pathway. The chain is Aspartate carbamoyltransferase catalytic subunit from Helicobacter pylori (strain ATCC 700392 / 26695) (Campylobacter pylori).